A 428-amino-acid chain; its full sequence is Isocitrate dehydrogenase [NADP], mitochondrial (428 aa).

The N-terminal 16 residues, M1 to A16, are a transit peptide targeting the mitochondrion. NADP(+) contacts are provided by residues T91–T93 and R98. T93 is a binding site for substrate. Residues S110–R116, R125, and R148 contribute to the substrate site. Mn(2+) is bound at residue D269. Position 277 (K277) interacts with NADP(+). A Mn(2+)-binding site is contributed by D292. Residues G327 to H332 and N345 each bind NADP(+).

Belongs to the isocitrate and isopropylmalate dehydrogenases family. As to quaternary structure, homodimer. Requires Mg(2+) as cofactor. Mn(2+) serves as cofactor.

Its subcellular location is the mitochondrion. It catalyses the reaction D-threo-isocitrate + NADP(+) = 2-oxoglutarate + CO2 + NADPH. Its activity is regulated as follows. The enzyme is subject to end product inhibition by NADPH and 2-oxoglutarate. In terms of biological role, mitochondrial IDP1 may regulate flux through the tricarboxylic acid cycle and respiration. Its probably critical function is the production of NADPH. In Saccharomyces cerevisiae (strain ATCC 204508 / S288c) (Baker's yeast), this protein is Isocitrate dehydrogenase [NADP], mitochondrial (IDP1).